The following is a 667-amino-acid chain: Serine/threonine-protein kinase BUR1 (667 aa).

The region spanning 60-378 is the Protein kinase domain; it reads YKEEEKLGQG…AMSAMKHPFF (319 aa). ATP-binding positions include 66-74 and K89; that span reads LGQGTFGEV. D207 (proton acceptor) is an active-site residue. The tract at residues 408-667 is disordered; it reads HEAMSQKGPS…SEQKDIADLY (260 aa). Basic and acidic residues predominate over residues 432–443; the sequence is KFEKKSGIKREQ. Positions 494–516 are enriched in polar residues; it reads NNHSGSLRNRITPSNMGTHSNPR. The span at 541–556 shows a compositional bias: low complexity; it reads YNRGYSSSVNSRYNNR. 3 stretches are compositionally biased toward polar residues: residues 582-594, 602-611, and 622-632; these read DNNQSQTRLQGHS, SKYNSTQTNI, and NEYNASKLGSQ. Residues 633-667 show a composition bias toward basic and acidic residues; the sequence is DTKKNDYPKHSETQKQQNNEEKKIHSEQKDIADLY.

The protein belongs to the protein kinase superfamily. CMGC Ser/Thr protein kinase family. CDC2/CDKX subfamily.

It is found in the nucleus. The catalysed reaction is L-seryl-[protein] + ATP = O-phospho-L-seryl-[protein] + ADP + H(+). It carries out the reaction L-threonyl-[protein] + ATP = O-phospho-L-threonyl-[protein] + ADP + H(+). It catalyses the reaction [DNA-directed RNA polymerase] + ATP = phospho-[DNA-directed RNA polymerase] + ADP + H(+). Serine/threonine-protein kinase involved in transcription regulation. Phosphorylates the UBC2/RAD6 ubiquitin-conjugating enzyme (E2), leading to monoubiquitination of histone H2B and the silencing of telomeric-associated genes. Also required for histone H3 methylation. Necessary for the recovery from pheromone-induced growth arrest in the cell cycle G1 phase. The chain is Serine/threonine-protein kinase BUR1 (BUR1) from Candida glabrata (strain ATCC 2001 / BCRC 20586 / JCM 3761 / NBRC 0622 / NRRL Y-65 / CBS 138) (Yeast).